A 657-amino-acid chain; its full sequence is Protein kinase and PP2C-like domain-containing protein (657 aa).

In terms of domain architecture, Protein kinase spans 32 to 327 (FSLLSPIAKG…LKIIEKHIAV (296 aa)). ATP is bound by residues 38 to 46 (IAKGSESTV) and Lys-59. The active-site Proton acceptor; for kinase activity is the Asp-156. Positions 390–647 (SWGSFATCGR…DNITVIVVFL (258 aa)) constitute a PPM-type phosphatase domain. The Mn(2+) site is built by Asp-426, Gly-427, Asp-598, and Asp-638.

The protein in the N-terminal section; belongs to the protein kinase superfamily. Ser/Thr protein kinase family. In the C-terminal section; belongs to the PP2C family. Requires Mg(2+) as cofactor. It depends on Mn(2+) as a cofactor.

The catalysed reaction is L-seryl-[protein] + ATP = O-phospho-L-seryl-[protein] + ADP + H(+). It carries out the reaction L-threonyl-[protein] + ATP = O-phospho-L-threonyl-[protein] + ADP + H(+). It catalyses the reaction O-phospho-L-seryl-[protein] + H2O = L-seryl-[protein] + phosphate. The enzyme catalyses O-phospho-L-threonyl-[protein] + H2O = L-threonyl-[protein] + phosphate. The protein is Protein kinase and PP2C-like domain-containing protein of Oryza sativa subsp. japonica (Rice).